The sequence spans 1898 residues: Receptor-type tyrosine-protein phosphatase F (1898 aa).

The N-terminal stretch at 1 to 29 (MAPEPAPGRRMVPLVPALVMLGLMAGAHG) is a signal peptide. Residues 30–1254 (DSKPVFVKVP…QQQEEPEMLW (1225 aa)) lie on the Extracellular side of the membrane. 3 Ig-like C2-type domains span residues 33 to 123 (PVFV…AKLS), 135 to 224 (PTID…ANLY), and 232 to 314 (PRFS…AQVT). C54 and C107 are joined by a disulfide. Residue 68–77 (KKGKKVSSQR) coordinates heparin. A glycan (N-linked (GlcNAc...) asparagine) is linked at N117. A disulfide bridge connects residues C156 and C207. N-linked (GlcNAc...) asparagine glycosylation is found at N250 and N295. Residues C253 and C298 are joined by a disulfide bond. 8 consecutive Fibronectin type-III domains span residues 321–411 (PPID…TGEQ), 416–510 (PPRR…TQQG), 514–604 (QPAD…TAQS), 609–706 (PPQK…TDED), 711–810 (PPRK…TTGA), 811–905 (VPGR…PEDA), 909–1001 (FPQN…TMPM), and 1005–1089 (FAKN…TAPD). The disordered stretch occupies residues 693–713 (GPESSPVLVRTDEDVPSGPPR). N721 is a glycosylation site (N-linked (GlcNAc...) asparagine). Residues N941 and N957 are each glycosylated (N-linked (GlcNAc...) asparagine). The chain crosses the membrane as a helical span at residues 1255–1275 (VTGPVLAVILIILIVIAILLF). Topologically, residues 1276–1898 (KRKRTHSPSS…YLGSFDHYAT (623 aa)) are cytoplasmic. At S1296 the chain carries Phosphoserine. Tyrosine-protein phosphatase domains lie at 1343 to 1598 (FSQE…LLEA) and 1630 to 1889 (MELE…ALEY). Residues D1507, 1539-1545 (CSAGVGR), and Q1583 each bind substrate. The active-site Phosphocysteine intermediate is the C1539. C1830 serves as the catalytic Phosphocysteine intermediate.

The protein belongs to the protein-tyrosine phosphatase family. Receptor class 2A subfamily. Interacts with GRIP1. Interacts with PPFIA1, PPFIA2 and PPFIA3. Interacts with PTPRF.

It is found in the membrane. It carries out the reaction O-phospho-L-tyrosyl-[protein] + H2O = L-tyrosyl-[protein] + phosphate. In terms of biological role, possible cell adhesion receptor. It possesses an intrinsic protein tyrosine phosphatase activity (PTPase) and dephosphorylates EPHA2 regulating its activity. Its function is as follows. The first PTPase domain has enzymatic activity, while the second one seems to affect the substrate specificity of the first one. The sequence is that of Receptor-type tyrosine-protein phosphatase F (Ptprf) from Rattus norvegicus (Rat).